Consider the following 286-residue polypeptide: Uridylate cyclase (286 aa).

Residues 90–223 (TAIFVDIRKS…DAVTKAANMS (134 aa)) form the Guanylate cyclase domain. An a ribonucleoside 5'-triphosphate-binding site is contributed by Phe-93. Mn(2+) contacts are provided by Asp-95, Ile-96, and Asp-140.

It belongs to the adenylyl cyclase class-4/guanylyl cyclase family. Pyrimidine cyclase subfamily. In terms of assembly, homodimer. The cofactor is Mn(2+).

Its subcellular location is the cytoplasm. The catalysed reaction is UTP = 3',5'-cyclic UMP + diphosphate. Its function is as follows. Pycsar (pyrimidine cyclase system for antiphage resistance) provides immunity against bacteriophage. The pyrimidine cyclase (PycC) synthesizes cyclic nucleotides in response to infection; these serve as specific second messenger signals. The signals activate the adjacent effector, leading to bacterial cell death and abortive phage infection. A clade C Pycsar system. The pyrimidine cyclase gene of a two-gene Pycsar system, weakly generates cyclic UMP (cUMP) from UTP, has little to no activity on ATP, CTP or GTP. Expression of this and adjacent effector TpPycTM (AC A0A1T4LJG1) probably confers resistance to bacteriophage. The genes are probably only expressed in response to bacteriophage infection. In Treponema porcinum, this protein is Uridylate cyclase.